Here is a 319-residue protein sequence, read N- to C-terminus: tRNA-modifying protein YgfZ (319 aa).

Folate-binding residues include Trp-27 and Trp-189.

It belongs to the tRNA-modifying YgfZ family.

It localises to the cytoplasm. Folate-binding protein involved in regulating the level of ATP-DnaA and in the modification of some tRNAs. It is probably a key factor in regulatory networks that act via tRNA modification, such as initiation of chromosomal replication. The polypeptide is tRNA-modifying protein YgfZ (Buchnera aphidicola subsp. Schizaphis graminum (strain Sg)).